Here is a 366-residue protein sequence, read N- to C-terminus: D-alanine--D-alanine ligase A (366 aa).

Positions 145-348 (KRLLRDAGLK…YRELITALIE (204 aa)) constitute an ATP-grasp domain. 175 to 230 (VEQLGLPLFVKPANQGSSVGVSKVKREADLRAALDEAFRYDHKVLVEQAVIGREIE) contacts ATP. Residues aspartate 302, glutamate 315, and asparagine 317 each coordinate Mg(2+).

This sequence belongs to the D-alanine--D-alanine ligase family. Requires Mg(2+) as cofactor. Mn(2+) is required as a cofactor.

It is found in the cytoplasm. It carries out the reaction 2 D-alanine + ATP = D-alanyl-D-alanine + ADP + phosphate + H(+). It participates in cell wall biogenesis; peptidoglycan biosynthesis. Cell wall formation. This is D-alanine--D-alanine ligase A from Chromobacterium violaceum (strain ATCC 12472 / DSM 30191 / JCM 1249 / CCUG 213 / NBRC 12614 / NCIMB 9131 / NCTC 9757 / MK).